The primary structure comprises 623 residues: Oviduct-specific glycoprotein (623 aa).

Positions M1–A21 are cleaved as a signal peptide. Positions H22–A385 constitute a GH18 domain. A disulfide bridge links C26 with C51. Residues L71–Q72, G98–N101, Y142, L211–D214, and W355 contribute to the chitin site. N-linked (GlcNAc...) asparagine glycosylation is found at N402 and N441. 2 disordered regions span residues L539–G558 and R594–G623. The segment covering T613–G623 has biased composition (polar residues).

It belongs to the glycosyl hydrolase 18 family. In terms of tissue distribution, oviduct.

Its subcellular location is the cytoplasmic vesicle. It localises to the secretory vesicle. In terms of biological role, binds to oocyte zona pellucida in vivo. May play a role in the fertilization process and/or early embryonic development. This Papio anubis (Olive baboon) protein is Oviduct-specific glycoprotein (OVGP1).